The sequence spans 388 residues: MMGPFFYFTAYVSLLFAFTQALPTINGATAGLFSIEQKQYRSNRVNWPPYELWRTLRKHHRPPPRGMTAVSRIKAYGEHTINGTVEVTPSEYDTEFVNEITVGNDTLYVDIDTGSSDFWVFSSQLPEQSQRNHRIYHPEETGTKLPKHTWESKYGDGTGAAGNVFLDKVNLAGLKVSSQAVEAATWVSYEFVDQQTTDGVMGFGFDNFNLTCLKHQAPGFYDFGFIDGTKHVGKPTYLPIDSLRGWWETTFNGFSAGDIDNSTYRFKAVIGINFELPDTGTTFMLLPKQITEQYYSTVPASMYDRNNGGWAFPCNTTLPNFTIHINDHKAIVPGEHIRWAQLPGTNTCFGGLQPVNNPPAILGGTFLKSQFVIFDYDGPKIGFAAQRN.

A signal peptide spans 1 to 21; sequence MMGPFFYFTAYVSLLFAFTQA. 2 N-linked (GlcNAc...) asparagine glycosylation sites follow: asparagine 82 and asparagine 104. One can recognise a Peptidase A1 domain in the interval 96–384; that stretch reads FVNEITVGND…DYDGPKIGFA (289 aa). The active site involves aspartate 112. Asparagine 209 and asparagine 261 each carry an N-linked (GlcNAc...) asparagine glycan. Aspartate 278 is a catalytic residue. Residues asparagine 315 and asparagine 320 are each glycosylated (N-linked (GlcNAc...) asparagine).

It belongs to the peptidase A1 family.

It is found in the secreted. In terms of biological role, probable aspartic-type endopeptidase which contributes to virulence. In Arthroderma otae (strain ATCC MYA-4605 / CBS 113480) (Microsporum canis), this protein is Probable aspartic-type endopeptidase MCYG_06955.